The sequence spans 251 residues: CDP-diacylglycerol pyrophosphatase (251 aa).

Residues Ala4–Trp24 form a helical membrane-spanning segment.

The protein belongs to the Cdh family.

The protein resides in the cell inner membrane. The catalysed reaction is a CDP-1,2-diacyl-sn-glycerol + H2O = a 1,2-diacyl-sn-glycero-3-phosphate + CMP + 2 H(+). It functions in the pathway phospholipid metabolism; CDP-diacylglycerol degradation; phosphatidate from CDP-diacylglycerol: step 1/1. This chain is CDP-diacylglycerol pyrophosphatase, found in Escherichia coli (strain K12 / MC4100 / BW2952).